The following is a 339-amino-acid chain: Holliday junction branch migration complex subunit RuvB (339 aa).

The large ATPase domain (RuvB-L) stretch occupies residues 2–187 (KDVNDEERII…FGIIEHMQYY (186 aa)). ATP is bound by residues leucine 26, arginine 27, glycine 68, lysine 71, threonine 72, threonine 73, 134 to 136 (EDF), arginine 177, tyrosine 187, and arginine 224. Threonine 72 contacts Mg(2+). Residues 188–258 (SIDDLEKIIQ…TTKHSLHLLE (71 aa)) form a small ATPAse domain (RuvB-S) region. Residues 261–339 (DEGLDQTDRK…QLGYPPKKAE (79 aa)) form a head domain (RuvB-H) region. DNA contacts are provided by arginine 316 and arginine 321.

The protein belongs to the RuvB family. In terms of assembly, homohexamer. Forms an RuvA(8)-RuvB(12)-Holliday junction (HJ) complex. HJ DNA is sandwiched between 2 RuvA tetramers; dsDNA enters through RuvA and exits via RuvB. An RuvB hexamer assembles on each DNA strand where it exits the tetramer. Each RuvB hexamer is contacted by two RuvA subunits (via domain III) on 2 adjacent RuvB subunits; this complex drives branch migration. In the full resolvosome a probable DNA-RuvA(4)-RuvB(12)-RuvC(2) complex forms which resolves the HJ.

The protein resides in the cytoplasm. The catalysed reaction is ATP + H2O = ADP + phosphate + H(+). Its function is as follows. The RuvA-RuvB-RuvC complex processes Holliday junction (HJ) DNA during genetic recombination and DNA repair, while the RuvA-RuvB complex plays an important role in the rescue of blocked DNA replication forks via replication fork reversal (RFR). RuvA specifically binds to HJ cruciform DNA, conferring on it an open structure. The RuvB hexamer acts as an ATP-dependent pump, pulling dsDNA into and through the RuvAB complex. RuvB forms 2 homohexamers on either side of HJ DNA bound by 1 or 2 RuvA tetramers; 4 subunits per hexamer contact DNA at a time. Coordinated motions by a converter formed by DNA-disengaged RuvB subunits stimulates ATP hydrolysis and nucleotide exchange. Immobilization of the converter enables RuvB to convert the ATP-contained energy into a lever motion, pulling 2 nucleotides of DNA out of the RuvA tetramer per ATP hydrolyzed, thus driving DNA branch migration. The RuvB motors rotate together with the DNA substrate, which together with the progressing nucleotide cycle form the mechanistic basis for DNA recombination by continuous HJ branch migration. Branch migration allows RuvC to scan DNA until it finds its consensus sequence, where it cleaves and resolves cruciform DNA. In Lactobacillus gasseri (strain ATCC 33323 / DSM 20243 / BCRC 14619 / CIP 102991 / JCM 1131 / KCTC 3163 / NCIMB 11718 / NCTC 13722 / AM63), this protein is Holliday junction branch migration complex subunit RuvB.